The sequence spans 249 residues: 3-deoxy-manno-octulosonate cytidylyltransferase (249 aa).

It belongs to the KdsB family.

It is found in the cytoplasm. It carries out the reaction 3-deoxy-alpha-D-manno-oct-2-ulosonate + CTP = CMP-3-deoxy-beta-D-manno-octulosonate + diphosphate. It participates in nucleotide-sugar biosynthesis; CMP-3-deoxy-D-manno-octulosonate biosynthesis; CMP-3-deoxy-D-manno-octulosonate from 3-deoxy-D-manno-octulosonate and CTP: step 1/1. Its pathway is bacterial outer membrane biogenesis; lipopolysaccharide biosynthesis. Activates KDO (a required 8-carbon sugar) for incorporation into bacterial lipopolysaccharide in Gram-negative bacteria. This Serratia proteamaculans (strain 568) protein is 3-deoxy-manno-octulosonate cytidylyltransferase.